We begin with the raw amino-acid sequence, 1406 residues long: Protein crumbs homolog 1 (1406 aa).

The first 25 residues, 1-25 (MALKNINYLLIFYLSFSLLIYIKNS), serve as a signal peptide directing secretion. The Extracellular portion of the chain corresponds to 26–1347 (FCNKNNTRCL…DDLISDIFTT (1322 aa)). 3 N-linked (GlcNAc...) asparagine glycosylation sites follow: Asn30, Asn41, and Asn42. 3 EGF-like domains span residues 30 to 68 (NNTRCLSNSCQNNSTCKDFSKDNDCSCSDTANNLDKDCD), 70 to 108 (MKDPCFSNPCQGSATCVNTPGERSFLCKCPPGYSGTICE), and 110 to 146 (TIGSCGKNSCQHGGICHQDPIYPVCICPAGYAGRFCE). Cystine bridges form between Cys34–Cys45, Cys39–Cys54, Cys56–Cys67, Cys74–Cys85, Cys79–Cys96, Cys98–Cys107, Cys114–Cys125, Cys119–Cys134, Cys136–Cys145, Cys152–Cys163, Cys157–Cys172, Cys174–Cys183, Cys190–Cys201, Cys195–Cys210, Cys212–Cys221, Cys228–Cys239, Cys233–Cys248, Cys250–Cys259, Cys266–Cys277, and Cys271–Cys286. An EGF-like 4; calcium-binding domain is found at 148–184 (DHDECASSPCQNGAVCQDGIDGYSCFCVPGYQGRHCD). One can recognise an EGF-like 5; calcium-binding domain in the interval 186-222 (EVDECASDPCKNEATCLNEIGRYTCICPHNYSGVNCE). N-linked (GlcNAc...) asparagine glycosylation is present at Asn215. The EGF-like 6; calcium-binding domain maps to 224–260 (EIDECWSQPCLNGATCQDALGAYFCDCAPGFLGDHCE). Positions 262-299 (NTDECASQPCLHGGLCVDGENRYSCNCTGSGFTGTHCE) constitute an EGF-like 7; calcium-binding domain. A glycan (N-linked (GlcNAc...) asparagine) is linked at Asn287. 13 disulfides stabilise this stretch: Cys288–Cys298, Cys305–Cys316, Cys310–Cys325, Cys327–Cys336, Cys343–Cys354, Cys348–Cys383, Cys385–Cys394, Cys401–Cys412, Cys406–Cys421, Cys423–Cys438, Cys445–Cys456, Cys450–Cys469, and Cys471–Cys480. 2 consecutive EGF-like domains span residues 301–337 (LMPLCWSKPCHNNATCEDSVDNYTCHCWPGYTGAQCE) and 339–395 (DLNE…IHCE). N-linked (GlcNAc...) asparagine glycosylation is found at Asn313 and Asn322. Residues 397–439 (DVNECSSNPCQNGGTCENLPGNYTCHCPFDNLSRTFYGGRDCS) enclose the EGF-like 10; calcium-binding domain. N-linked (GlcNAc...) asparagine glycosylation is found at Asn418, Asn427, and Asn453. An EGF-like 11 domain is found at 441–481 (ILLGCTHQQCLNNGTCIPHFQDGQHGFSCLCPSGYTGSLCE). A Laminin G-like 1 domain is found at 485-670 (TLSFEGDGFL…GSSLNVKAGC (186 aa)). N-linked (GlcNAc...) asparagine glycans are attached at residues Asn550, Asn561, and Asn657. 4 disulfides stabilise this stretch: Cys642–Cys670, Cys676–Cys687, Cys681–Cys696, and Cys698–Cys707. The region spanning 672-708 (RKDWCESQPCQSRGRCINLWLSYQCDCHRPYEGPNCL) is the EGF-like 12 domain. Residues 714-885 (GRFGQDDSTG…PVLVNVTQGC (172 aa)) enclose the Laminin G-like 2 domain. N-linked (GlcNAc...) asparagine glycosylation is found at Asn757, Asn871, and Asn880. 6 disulfides stabilise this stretch: Cys851–Cys885, Cys891–Cys902, Cys896–Cys911, Cys913–Cys922, Cys928–Cys939, and Cys933–Cys948. EGF-like domains are found at residues 887–923 (GDNSCKSNPCHNGGVCHSRWDDFSCSCPALTSGKACE) and 924–960 (EVQWCGFSPCPHGAQCQPVLQGFECIANAVFNGQSGQ). A Laminin G-like 3 domain is found at 950-1137 (ANAVFNGQSG…ISTNSVVTGC (188 aa)). Asn968, Asn975, and Asn1000 each carry an N-linked (GlcNAc...) asparagine glycan. Disulfide bonds link Cys1096/Cys1137, Cys1143/Cys1154, Cys1148/Cys1163, Cys1165/Cys1174, Cys1181/Cys1191, Cys1186/Cys1200, Cys1202/Cys1211, Cys1218/Cys1229, Cys1223/Cys1238, Cys1240/Cys1249, Cys1259/Cys1274, Cys1268/Cys1283, Cys1285/Cys1294, Cys1301/Cys1312, Cys1306/Cys1321, and Cys1323/Cys1332. One can recognise an EGF-like 15 domain in the interval 1139-1175 (QLNVCNSNPCLHGGNCEDIYSSYHCSCPLGWSGKHCE). Residues 1177–1212 (NIDECFSNPCIHGNCSDRVAAYHCTCEPGYTGVNCE) enclose the EGF-like 16; calcium-binding domain. The N-linked (GlcNAc...) asparagine glycan is linked to Asn1190. 2 consecutive EGF-like domains span residues 1214–1250 (DIDNCQSHQCANGATCISHTNGYSCLCFGNFTGKFCR) and 1255–1295 (PSTV…EWCE). N-linked (GlcNAc...) asparagine glycans are attached at residues Asn1243, Asn1265, and Asn1273. One can recognise an EGF-like 19; calcium-binding domain in the interval 1297-1333 (DIDECASDPCVNGGLCQDLLNKFQCLCDVAFAGERCE). A helical membrane pass occupies residues 1348 to 1368 (IGSVTVALLLILLLAIVASVV). Over 1369-1406 (TSNKRATQGTYSPSRQEKEGSRVEMWNLMPPPAMERLI) the chain is Cytoplasmic. The segment at 1370 to 1406 (SNKRATQGTYSPSRQEKEGSRVEMWNLMPPPAMERLI) is interaction with EPB41L5.

This sequence belongs to the Crumbs protein family. As to quaternary structure, component of a complex composed of PALS1, CRB1 and EPB41L5. Within the complex, interacts (via intracellular domain) with PALS1 and EPB41L5 (via FERM domain). Forms a complex with MPP4 and PALS1. Interacts with MPDZ/MUPP1 and MPP4. Post-translationally, extensively glycosylated. Preferential expression in retina, also expressed in brain, testis, fetal brain and fetal eye. Expressed at the outer limiting membrane and apical to adherens junctions in the retina.

Its subcellular location is the apical cell membrane. It localises to the secreted. The protein localises to the cell projection. The protein resides in the cilium. It is found in the photoreceptor outer segment. Its subcellular location is the photoreceptor inner segment. Plays a role in photoreceptor morphogenesis in the retina. May maintain cell polarization and adhesion. This chain is Protein crumbs homolog 1, found in Homo sapiens (Human).